Consider the following 234-residue polypeptide: Glucosamine-6-phosphate deaminase (234 aa).

D62 functions as the Proton acceptor; for enolization step in the catalytic mechanism. N128 (for ring-opening step) is an active-site residue. The Proton acceptor; for ring-opening step role is filled by H130. E135 functions as the For ring-opening step in the catalytic mechanism.

It belongs to the glucosamine/galactosamine-6-phosphate isomerase family. NagB subfamily.

The enzyme catalyses alpha-D-glucosamine 6-phosphate + H2O = beta-D-fructose 6-phosphate + NH4(+). It functions in the pathway amino-sugar metabolism; N-acetylneuraminate degradation; D-fructose 6-phosphate from N-acetylneuraminate: step 5/5. Functionally, catalyzes the reversible isomerization-deamination of glucosamine 6-phosphate (GlcN6P) to form fructose 6-phosphate (Fru6P) and ammonium ion. This is Glucosamine-6-phosphate deaminase from Streptococcus equi subsp. equi (strain 4047).